Here is a 331-residue protein sequence, read N- to C-terminus: UDP-xylose and UDP-N-acetylglucosamine transporter (331 aa).

Helical transmembrane passes span 5-25 (FAVT…ELLV), 30-50 (GCGN…GFIF), 59-79 (PQIP…VSVI), 92-112 (LHMI…IIIL), 122-142 (LSIV…AKQV), 153-173 (GVYA…ALLM), 201-221 (CLPL…AVLF), 238-260 (VMWF…VFIL), 267-289 (LTVT…LYFQ), and 301-321 (AVVF…PAAF).

The protein belongs to the nucleotide-sugar transporter family. SLC35B subfamily.

It localises to the golgi apparatus membrane. Its function is as follows. Sugar transporter that specifically mediates the transport of UDP-xylose (UDP-Xyl) and UDP-N-acetylglucosamine (UDP-GlcNAc) from cytosol into Golgi. The polypeptide is UDP-xylose and UDP-N-acetylglucosamine transporter (slc35b4) (Danio rerio (Zebrafish)).